The sequence spans 308 residues: HPr kinase/phosphorylase (308 aa).

Catalysis depends on residues His-141 and Lys-162. Residue 156–163 (GKSGVGKS) coordinates ATP. Mg(2+) is bound at residue Ser-163. Asp-180 functions as the Proton acceptor; for phosphorylation activity. Proton donor; for dephosphorylation activity in the catalytic mechanism. Residues 204–213 (MEIRGVGILD) form an important for the catalytic mechanism of both phosphorylation and dephosphorylation region. Glu-205 contributes to the Mg(2+) binding site. Residue Arg-246 is part of the active site. Residues 267 to 272 (PVKPGR) form an important for the catalytic mechanism of dephosphorylation region.

The protein belongs to the HPrK/P family. In terms of assembly, homohexamer. The cofactor is Mg(2+).

The catalysed reaction is [HPr protein]-L-serine + ATP = [HPr protein]-O-phospho-L-serine + ADP + H(+). It catalyses the reaction [HPr protein]-O-phospho-L-serine + phosphate + H(+) = [HPr protein]-L-serine + diphosphate. Functionally, catalyzes the ATP- as well as the pyrophosphate-dependent phosphorylation of a specific serine residue in HPr, a phosphocarrier protein of the phosphoenolpyruvate-dependent sugar phosphotransferase system (PTS). HprK/P also catalyzes the pyrophosphate-producing, inorganic phosphate-dependent dephosphorylation (phosphorolysis) of seryl-phosphorylated HPr (P-Ser-HPr). The two antagonistic activities of HprK/P are regulated by several intracellular metabolites, which change their concentration in response to the absence or presence of rapidly metabolisable carbon sources (glucose, fructose, etc.) in the growth medium. Therefore, by controlling the phosphorylation state of HPr, HPrK/P is a sensor enzyme that plays a major role in the regulation of carbon metabolism and sugar transport: it mediates carbon catabolite repression (CCR), and regulates PTS-catalyzed carbohydrate uptake and inducer exclusion. This chain is HPr kinase/phosphorylase, found in Peptoclostridium acidaminophilum (Eubacterium acidaminophilum).